Consider the following 209-residue polypeptide: Pyridoxine/pyridoxamine 5'-phosphate oxidase (209 aa).

FMN-binding positions include 57–62 (RMVLLK), 72–73 (YT), K79, and Q101. Position 62 (K62) interacts with substrate. Substrate contacts are provided by Y119, R123, and S127. Residues 136 to 137 (QS) and W181 contribute to the FMN site. Residue 187-189 (RLH) coordinates substrate. R191 serves as a coordination point for FMN.

Belongs to the pyridoxamine 5'-phosphate oxidase family. As to quaternary structure, homodimer. The cofactor is FMN.

The catalysed reaction is pyridoxamine 5'-phosphate + O2 + H2O = pyridoxal 5'-phosphate + H2O2 + NH4(+). It carries out the reaction pyridoxine 5'-phosphate + O2 = pyridoxal 5'-phosphate + H2O2. It participates in cofactor metabolism; pyridoxal 5'-phosphate salvage; pyridoxal 5'-phosphate from pyridoxamine 5'-phosphate: step 1/1. Its pathway is cofactor metabolism; pyridoxal 5'-phosphate salvage; pyridoxal 5'-phosphate from pyridoxine 5'-phosphate: step 1/1. Functionally, catalyzes the oxidation of either pyridoxine 5'-phosphate (PNP) or pyridoxamine 5'-phosphate (PMP) into pyridoxal 5'-phosphate (PLP). The chain is Pyridoxine/pyridoxamine 5'-phosphate oxidase from Chelativorans sp. (strain BNC1).